A 198-amino-acid chain; its full sequence is Cell division protein SepF (198 aa).

The interval 170–198 (EVPQPPARPARPASTNPPAWGNETNRMAQ) is disordered. Over residues 179 to 188 (ARPASTNPPA) the composition is skewed to low complexity.

This sequence belongs to the SepF family. Homodimer. Interacts with FtsZ.

It is found in the cytoplasm. Cell division protein that is part of the divisome complex and is recruited early to the Z-ring. Probably stimulates Z-ring formation, perhaps through the cross-linking of FtsZ protofilaments. Its function overlaps with FtsA. The sequence is that of Cell division protein SepF from Trichormus variabilis (strain ATCC 29413 / PCC 7937) (Anabaena variabilis).